The following is a 471-amino-acid chain: Alpha-galactosidase 5 (471 aa).

A signal peptide spans 1-18 (MFAFYFLTACTTLKGVFG). A disulfide bridge connects residues Cys-42 and Cys-74. Substrate contacts are provided by Asp-72 and Asp-73. An N-linked (GlcNAc...) asparagine glycan is attached at Asn-105. Residues Cys-121 and Cys-151 are joined by a disulfide bond. Substrate is bound at residue Lys-147. Residue Asp-149 is the Nucleophile of the active site. Residue Asn-175 is glycosylated (N-linked (GlcNAc...) asparagine). Arg-205 contributes to the substrate binding site. The Proton donor role is filled by Asp-209. Intrachain disulfides connect Cys-221–Cys-237 and Cys-223–Cys-230. Gln-251 is a substrate binding site. N-linked (GlcNAc...) asparagine glycosylation is found at Asn-270, Asn-370, Asn-403, Asn-422, Asn-435, and Asn-454.

Belongs to the glycosyl hydrolase 27 family. As to quaternary structure, homotetramer.

The protein localises to the secreted. It catalyses the reaction Hydrolysis of terminal, non-reducing alpha-D-galactose residues in alpha-D-galactosides, including galactose oligosaccharides, galactomannans and galactolipids.. The sequence is that of Alpha-galactosidase 5 (MEL5) from Saccharomyces cerevisiae (Baker's yeast).